The chain runs to 178 residues: Caveolin-1 (178 aa).

An N-acetylserine modification is found at Ser-2. Residue Ser-2 is modified to Phosphoserine. Positions 2-94 (SGGKYVDSEG…WKASFTTFTV (93 aa)) are required for homooligomerization. At 2–104 (SGGKYVDSEG…TKYWFYRLLS (103 aa)) the chain is on the cytoplasmic side. An N6-acetyllysine; alternate modification is found at Lys-5. A Glycyl lysine isopeptide (Lys-Gly) (interchain with G-Cter in ubiquitin); alternate cross-link involves residue Lys-5. Position 6 is a phosphotyrosine (Tyr-6). A Phosphoserine modification is found at Ser-9. Tyr-14 carries the post-translational modification Phosphotyrosine; by ABL1. Tyr-25 is subject to Phosphotyrosine. Glycyl lysine isopeptide (Lys-Gly) (interchain with G-Cter in ubiquitin) cross-links involve residues Lys-26, Lys-30, Lys-39, Lys-47, and Lys-57. Residues 82-94 (DGIWKASFTTFTV) are interaction with CAVIN3. The segment at residues 105 to 125 (ALFGIPMALIWGIYFAILSFL) is an intramembrane region (helical). Over 126–178 (HIWAVVPCIKSFLIEIQCISRVYSIYVHTFCDPLFEAIGKIFSNIRINMQKEI) the chain is Cytoplasmic. Positions 131–142 (VPCIKSFLIEIQ) are interacts with SPRY1, SPRY2, SPRY3 and SPRY4. Residues Cys-133, Cys-143, and Cys-156 are each lipidated (S-palmitoyl cysteine). Residues 149–160 (SIYVHTFCDPLF) form an interacts with SPRY1, SPRY2, and SPRY4 region. The interval 167 to 178 (FSNIRINMQKEI) is interacts with SPRY1, SPRY2, SPRY3 and SPRY4.

Belongs to the caveolin family. As to quaternary structure, homooligomer. Interacts with GLIPR2. Interacts with NOSTRIN. Interacts with SNAP25 and STX1A. Interacts (via the N-terminus) with DPP4; the interaction is direct. Interacts with CTNNB1, CDH1 and JUP. Interacts with PACSIN2; this interaction induces membrane tubulation. Interacts with SLC7A9. Interacts with BMX and BTK. Interacts with TGFBR1. Interacts with CAVIN3 (via leucine-zipper domain) in a cholesterol-sensitive manner. Interacts with CAVIN1. Interacts with EHD2 in a cholesterol-dependent manner. Forms a ternary complex with UBXN6 and VCP; mediates CAV1 targeting to lysosomes for degradation. Interacts with ABCG1; this interaction regulates ABCG1-mediated cholesterol efflux. Interacts with NEU3; this interaction enhances NEU3 sialidase activity within caveola. Interacts (via C-terminus) with SPRY1, SPRY2 (via C-terminus), SPRY3, and SPRY4. Interacts with IGFBP5; this interaction allows trafficking of IGFBP5 from the plasma membrane to the nucleus. Phosphorylated at Tyr-14 by ABL1 in response to oxidative stress. In terms of processing, ubiquitinated. Undergo monoubiquitination and multi- and/or polyubiquitination. Monoubiquitination of N-terminal lysines promotes integration in a ternary complex with UBXN6 and VCP which promotes oligomeric CAV1 targeting to lysosomes for degradation. Ubiquitinated by ZNRF1; leading to degradation and modulation of the TLR4-mediated immune response.

It localises to the golgi apparatus membrane. The protein localises to the cell membrane. The protein resides in the membrane. It is found in the caveola. Its subcellular location is the membrane raft. Functionally, may act as a scaffolding protein within caveolar membranes. Forms a stable heterooligomeric complex with CAV2 that targets to lipid rafts and drives caveolae formation. Mediates the recruitment of CAVIN proteins (CAVIN1/2/3/4) to the caveolae. Interacts directly with G-protein alpha subunits and can functionally regulate their activity. Involved in the costimulatory signal essential for T-cell receptor (TCR)-mediated T-cell activation. Its binding to DPP4 induces T-cell proliferation and NF-kappa-B activation in a T-cell receptor/CD3-dependent manner. Recruits CTNNB1 to caveolar membranes and may regulate CTNNB1-mediated signaling through the Wnt pathway. Negatively regulates TGFB1-mediated activation of SMAD2/3 by mediating the internalization of TGFBR1 from membrane rafts leading to its subsequent degradation. Binds 20(S)-hydroxycholesterol (20(S)-OHC). This is Caveolin-1 (CAV1) from Muntiacus reevesi (Reeves' muntjac).